The following is a 308-amino-acid chain: Glutaminase (308 aa).

7 residues coordinate substrate: Ser-66, Asn-117, Glu-161, Asn-168, Tyr-192, Tyr-244, and Val-262.

The protein belongs to the glutaminase family. Homotetramer.

The catalysed reaction is L-glutamine + H2O = L-glutamate + NH4(+). The chain is Glutaminase from Salmonella agona (strain SL483).